The chain runs to 195 residues: MDLEKGKKPSEQAAACRIMQVKDKLITLQPVVRACVFLATAVAAVIMGLNKQSYTTVVAIVGTRPVTQTFTAKFKDTPAFVFFVIANAIASGYNLMVLVTRRILQRRAQSLSVHLLDMVILTLLATGSATAASMAQLGKNGNLHARWNPICDKFGSFCNHGGIALVSSFIGVALMLALNLLSAAANSPRSNVTGQ.

Over 1-25 (MDLEKGKKPSEQAAACRIMQVKDKL) the chain is Cytoplasmic. Residues 26–46 (ITLQPVVRACVFLATAVAAVI) form a helical membrane-spanning segment. At 47 to 78 (MGLNKQSYTTVVAIVGTRPVTQTFTAKFKDTP) the chain is on the extracellular side. Residues 79 to 99 (AFVFFVIANAIASGYNLMVLV) form a helical membrane-spanning segment. Topologically, residues 100–114 (TRRILQRRAQSLSVH) are cytoplasmic. The chain crosses the membrane as a helical span at residues 115-135 (LLDMVILTLLATGSATAASMA). Residues 136 to 160 (QLGKNGNLHARWNPICDKFGSFCNH) are Extracellular-facing. A helical transmembrane segment spans residues 161 to 181 (GGIALVSSFIGVALMLALNLL). The Cytoplasmic segment spans residues 182-195 (SAAANSPRSNVTGQ).

The protein belongs to the Casparian strip membrane proteins (CASP) family. In terms of assembly, homodimer and heterodimers.

The protein localises to the cell membrane. This is CASP-like protein 1B2 from Oryza sativa subsp. indica (Rice).